A 195-amino-acid chain; its full sequence is MTADEVVALYKEDGALLHGHFLLSSGLHSDTYLQSARVLQYPGHAARLCAAMVAGIPDDLRRRISCVVGPAMGAVLVSYECGRALGVRSLFTEREAGQMVLRRGFVLAPGEGVLVVEDITTTGGSTRECMAAVTAAGGQVLAASAIIDRSSGFSDFDGAPFFPLLKLPVLTWEAAACPLCAAGGTPVKPGSRGLS.

Residue 117 to 125 (EDITTTGGS) coordinates 5-phospho-alpha-D-ribose 1-diphosphate. Orotate contacts are provided by Thr-121 and Arg-149.

It belongs to the purine/pyrimidine phosphoribosyltransferase family. PyrE subfamily. Homodimer. The cofactor is Mg(2+).

It carries out the reaction orotidine 5'-phosphate + diphosphate = orotate + 5-phospho-alpha-D-ribose 1-diphosphate. Its pathway is pyrimidine metabolism; UMP biosynthesis via de novo pathway; UMP from orotate: step 1/2. Functionally, catalyzes the transfer of a ribosyl phosphate group from 5-phosphoribose 1-diphosphate to orotate, leading to the formation of orotidine monophosphate (OMP). This is Orotate phosphoribosyltransferase from Acidithiobacillus ferrooxidans (strain ATCC 53993 / BNL-5-31) (Leptospirillum ferrooxidans (ATCC 53993)).